A 471-amino-acid chain; its full sequence is Probable ribonuclease FAU-1 (471 aa).

This sequence belongs to the FAU-1 family.

Probable RNase involved in rRNA stability through maturation and/or degradation of precursor rRNAs. Preferentially cleaves UA sequences in the 5' precursor region of 5S rRNA. Binds to RNA in loop regions with AU-rich sequences. This chain is Probable ribonuclease FAU-1, found in Thermococcus kodakarensis (strain ATCC BAA-918 / JCM 12380 / KOD1) (Pyrococcus kodakaraensis (strain KOD1)).